The sequence spans 436 residues: MQPVVETLSGLERRVDLAVSVAEVEKEVQAQLKRVGRTAKVAGFRPGKAPLAMLERSHGPGIRYDVINSLVGRAFEQAVDGAKLRVAGSPTLTPKTEGVADDTLAFTATFEVYPEVTVPDLSALAVTRYDTPVTDAEVNQTLDVLRKQRAKFETREGRASQDGDRVVLDFAGTIDGVPFEGGKAEDFPFVLGQGRMLPEFEEAALGLKAGESKVFPLKFPDDYQGKEVAGKTAEFTITVKEVAEGVLPEVDAEFAKSLGQAEGDVEKLKADIRTNIEREVKARLQGRTKGSVMDALVEAGKFDVPKALVDSDVEGRIAAAREELKQRGVPNADSVPMPAEVFSTESERRVRLGLLVSELVKQAQLQAKPEQVRARIEEFAQNYEQPAQVVSYYLADRQRRAEIEAIVLEDNVVAHVLENAKVADEKVPFDQLMGMA.

One can recognise a PPIase FKBP-type domain in the interval 163–248 (GDRVVLDFAG…VKEVAEGVLP (86 aa)).

It belongs to the FKBP-type PPIase family. Tig subfamily.

Its subcellular location is the cytoplasm. The enzyme catalyses [protein]-peptidylproline (omega=180) = [protein]-peptidylproline (omega=0). Involved in protein export. Acts as a chaperone by maintaining the newly synthesized protein in an open conformation. Functions as a peptidyl-prolyl cis-trans isomerase. This chain is Trigger factor, found in Bordetella bronchiseptica (strain ATCC BAA-588 / NCTC 13252 / RB50) (Alcaligenes bronchisepticus).